The primary structure comprises 179 residues: Zinc finger HIT domain-containing protein 3 (179 aa).

Zn(2+) is bound by residues C11, C14, C22, C25, C30, C34, H38, and C49. An HIT-type zinc finger spans residues 11–49 (CVVCLEKPKYRCPACRVPYCSLPCFRKHKAPPLQQLPVC). At S104 the chain carries Phosphoserine.

In terms of assembly, thyroid receptor interacting proteins (TRIPs) specifically interact with the ligand binding domain of the thyroid receptor (TR). Requires the presence of thyroid hormone for its interaction. Interacts with NUFIP1. Interacts (via HIT-type zinc finger) with the RUVBL1/RUVBL2 complex in the presence of ADP.

The protein resides in the cytoplasm. It is found in the nucleus. The polypeptide is Zinc finger HIT domain-containing protein 3 (ZNHIT3) (Bos taurus (Bovine)).